Here is a 182-residue protein sequence, read N- to C-terminus: Early nodulin-like protein 10 (182 aa).

Positions M1 to G20 are cleaved as a signal peptide. The 105-residue stretch at R21–S125 folds into the Phytocyanin domain. N65 carries N-linked (GlcNAc...) asparagine glycosylation. C79 and C113 are joined by a disulfide. N-linked (GlcNAc...) asparagine glycosylation is found at N129 and N148. A lipid anchor (GPI-anchor amidated asparagine) is attached at N157. A propeptide spans A158–V182 (removed in mature form).

This sequence belongs to the early nodulin-like (ENODL) family. Mostly expressed in flowers, and, to a lower extent, in leaves, but barely in seedlings, stems, seeds and roots.

The protein resides in the cell membrane. Its function is as follows. May act as a carbohydrate transporter. The polypeptide is Early nodulin-like protein 10 (Arabidopsis thaliana (Mouse-ear cress)).